Reading from the N-terminus, the 762-residue chain is 5-methyltetrahydropteroyltriglutamate--homocysteine methyltransferase (762 aa).

Residues 18 to 21 (REWK) and K112 contribute to the 5-methyltetrahydropteroyltri-L-glutamate site. Residues 435-437 (IGS) and E488 each bind L-homocysteine. L-methionine contacts are provided by residues 435–437 (IGS) and E488. 5-methyltetrahydropteroyltri-L-glutamate contacts are provided by residues 519–520 (RC) and W565. Position 603 (D603) interacts with L-homocysteine. D603 serves as a coordination point for L-methionine. E609 contributes to the 5-methyltetrahydropteroyltri-L-glutamate binding site. Zn(2+)-binding residues include H645, C647, and E669. The active-site Proton donor is H698. C730 contacts Zn(2+).

This sequence belongs to the vitamin-B12 independent methionine synthase family. Zn(2+) serves as cofactor.

It carries out the reaction 5-methyltetrahydropteroyltri-L-glutamate + L-homocysteine = tetrahydropteroyltri-L-glutamate + L-methionine. Its pathway is amino-acid biosynthesis; L-methionine biosynthesis via de novo pathway; L-methionine from L-homocysteine (MetE route): step 1/1. Functionally, catalyzes the transfer of a methyl group from 5-methyltetrahydrofolate to homocysteine resulting in methionine formation. The sequence is that of 5-methyltetrahydropteroyltriglutamate--homocysteine methyltransferase from Bacillus velezensis (strain DSM 23117 / BGSC 10A6 / LMG 26770 / FZB42) (Bacillus amyloliquefaciens subsp. plantarum).